Reading from the N-terminus, the 419-residue chain is MIDLKLLREDPDVVRRSQLSRGEDPALVDALLTADTARRTAISTADSLRAEQKAASKSVGGASPEERPALLQRAKDLAEQVKAAEATQSETETAFTAAHMAIPNVILDGVPAGGEDDYAVLDVVGEPRALDNPKDHLELGESLGLIDMARGAKVAGSRFYFLTGQGALLQLGLLQLALRLAVDNGFIPMIPPVLVRPEVMAGTGFLGAHADEVYRLEADDLYLVGTSEVPMAGYHADEIVDLSEGPLRYAGWSSCFRREAGSYGKDTRGIIRVHQFDKVEGFVYCAPADAEAEHQRLLAWQREMLAQIEVPYRVIDVAAGDLGASAARKFDCEAWVPTQGTYRELTSTSNCTTFQARRLATRYRDANGKPQIAATLNGTLGTTRWLVSILENHQQPDGSARVPAALVGFVGTEVLEPKG.

The tract at residues 45–66 (ADSLRAEQKAASKSVGGASPEE) is disordered. Residue 226 to 228 (TSE) coordinates L-serine. ATP contacts are provided by residues 257-259 (RRE) and Val273. Residue Glu280 participates in L-serine binding. 344–347 (ELTS) lines the ATP pocket. Residue Thr379 coordinates L-serine.

The protein belongs to the class-II aminoacyl-tRNA synthetase family. Type-1 seryl-tRNA synthetase subfamily. As to quaternary structure, homodimer. The tRNA molecule binds across the dimer.

The protein localises to the cytoplasm. It catalyses the reaction tRNA(Ser) + L-serine + ATP = L-seryl-tRNA(Ser) + AMP + diphosphate + H(+). The enzyme catalyses tRNA(Sec) + L-serine + ATP = L-seryl-tRNA(Sec) + AMP + diphosphate + H(+). Its pathway is aminoacyl-tRNA biosynthesis; selenocysteinyl-tRNA(Sec) biosynthesis; L-seryl-tRNA(Sec) from L-serine and tRNA(Sec): step 1/1. Catalyzes the attachment of serine to tRNA(Ser). Is also able to aminoacylate tRNA(Sec) with serine, to form the misacylated tRNA L-seryl-tRNA(Sec), which will be further converted into selenocysteinyl-tRNA(Sec). The protein is Serine--tRNA ligase of Mycobacterium ulcerans (strain Agy99).